The chain runs to 61 residues: Metallothionein-2 (61 aa).

Met-1 carries the post-translational modification N-acetylmethionine. The tract at residues 1–29 (MDPNCSCASDGSCSCAGACKCKQCKCTSC) is beta. Residues Cys-5, Cys-7, Cys-13, Cys-15, Cys-19, Cys-21, Cys-24, Cys-26, Cys-29, Cys-33, Cys-34, Cys-36, Cys-37, Cys-41, Cys-44, Cys-48, Cys-50, and Cys-57 each coordinate a divalent metal cation. Residues 30–61 (KKSCCSCCPVGCAKCSQGCICKEASDKCSCCA) form an alpha region. Ser-58 is subject to Phosphoserine. Residues Cys-59 and Cys-60 each coordinate a divalent metal cation.

It belongs to the metallothionein superfamily. Type 1 family.

Metallothioneins have a high content of cysteine residues that bind various heavy metals; these proteins are transcriptionally regulated by both heavy metals and glucocorticoids. In Mus musculus (Mouse), this protein is Metallothionein-2 (Mt2).